A 95-amino-acid polypeptide reads, in one-letter code: MNLYDVIRRPLVTEKGVMKKDTERTLCFEVSADANKTQVKSAVEKLFKVKVDEVRTATFEGKLRRRGRFSGYRSDWKKAYVKLKAGEKVPDFAEI.

Belongs to the universal ribosomal protein uL23 family. In terms of assembly, part of the 50S ribosomal subunit. Contacts protein L29, and trigger factor when it is bound to the ribosome.

In terms of biological role, one of the early assembly proteins it binds 23S rRNA. One of the proteins that surrounds the polypeptide exit tunnel on the outside of the ribosome. Forms the main docking site for trigger factor binding to the ribosome. The protein is Large ribosomal subunit protein uL23 of Solibacter usitatus (strain Ellin6076).